The primary structure comprises 396 residues: NAD(P)H oxidoreductase RTN4IP1, mitochondrial (396 aa).

A mitochondrion-targeting transit peptide spans 1-40 (MGVLKTCVLRRSACAAACFWRRTVIPKPPFRGISTTSARS). In terms of domain architecture, Enoyl reductase (ER) spans 52 to 393 (GKNEVLRFTQ…RGHARGKTVV (342 aa)). Ser-214, Gly-216, Val-217, Ser-237, Tyr-255, Asn-276, Leu-300, Ala-341, Phe-343, His-386, Ala-387, and Arg-388 together coordinate NADPH.

It belongs to the zinc-containing alcohol dehydrogenase family. Quinone oxidoreductase subfamily. In terms of assembly, interacts with RTN4, UQCRC1 and UQCRC2. In terms of tissue distribution, widely expressed in mitochondria-enriched tissues. Found in heart, kidney, liver, brain and spinal cord.

Its subcellular location is the mitochondrion matrix. The protein resides in the mitochondrion outer membrane. The catalysed reaction is a 3-demethylubiquinone + NADH + 2 H(+) = a 3-demethylubiquinol + NAD(+). The enzyme catalyses a 3-demethylubiquinone + NADPH + 2 H(+) = a 3-demethylubiquinol + NADP(+). It catalyses the reaction 3-demethylubiquinone-10 + NADH + 2 H(+) = 3-demethylubiquinol-10 + NAD(+). It carries out the reaction 3-demethylubiquinone-10 + NADPH + 2 H(+) = 3-demethylubiquinol-10 + NADP(+). Its pathway is cofactor biosynthesis; ubiquinone biosynthesis. Its function is as follows. NAD(P)H oxidoreductase involved in the ubiquinone biosynthetic pathway. Required for the O-methyltransferase activity of COQ3. Able to catalyze the oxidoreduction of 3-demethylubiquinone into 3-demethylubiquinol in vitro. However, it is unclear if 3-demethylubiquinone constitutes a substrate in vivo. May also play a role in the regulation of retinal ganglion cell (RGC) neurite outgrowth, and hence in the development of the inner retina and optic nerve. Appears to be a potent inhibitor of regeneration following spinal cord injury. The protein is NAD(P)H oxidoreductase RTN4IP1, mitochondrial of Mus musculus (Mouse).